A 72-amino-acid chain; its full sequence is Sec-independent protein translocase protein TatA (72 aa).

The helical transmembrane segment at 1-21 (MAGLSIWHVVIFAIVVILLFG) threads the bilayer. The segment at 47–72 (DEAASLNSPRTIDAQVKTSESTSVKS) is disordered. Polar residues predominate over residues 51–72 (SLNSPRTIDAQVKTSESTSVKS).

The protein belongs to the TatA/E family. As to quaternary structure, the Tat system comprises two distinct complexes: a TatABC complex, containing multiple copies of TatA, TatB and TatC subunits, and a separate TatA complex, containing only TatA subunits. Substrates initially bind to the TatABC complex, which probably triggers association of the separate TatA complex to form the active translocon.

Its subcellular location is the cell inner membrane. Functionally, part of the twin-arginine translocation (Tat) system that transports large folded proteins containing a characteristic twin-arginine motif in their signal peptide across membranes. TatA could form the protein-conducting channel of the Tat system. In Acinetobacter baumannii (strain AB307-0294), this protein is Sec-independent protein translocase protein TatA.